A 519-amino-acid polypeptide reads, in one-letter code: Ribonuclease Y (519 aa).

The helical transmembrane segment at 6-26 (VPFYLLIFLVGIGLGVLTFWA) threads the bilayer. In terms of domain architecture, KH spans 209 to 272 (TVCTVTIPNE…HIAKMALTEL (64 aa)). In terms of domain architecture, HD spans 335–428 (VLDHSLEVSH…CSAADAISAS (94 aa)).

The protein belongs to the RNase Y family.

Its subcellular location is the cell membrane. In terms of biological role, endoribonuclease that initiates mRNA decay. The sequence is that of Ribonuclease Y from Protochlamydia amoebophila (strain UWE25).